A 143-amino-acid polypeptide reads, in one-letter code: Nucleoside diphosphate kinase (143 aa).

K11, F59, R87, T93, R104, and N114 together coordinate ATP. Catalysis depends on H117, which acts as the Pros-phosphohistidine intermediate.

The protein belongs to the NDK family. In terms of assembly, homotetramer. Mg(2+) serves as cofactor.

The protein resides in the cytoplasm. The enzyme catalyses a 2'-deoxyribonucleoside 5'-diphosphate + ATP = a 2'-deoxyribonucleoside 5'-triphosphate + ADP. It carries out the reaction a ribonucleoside 5'-diphosphate + ATP = a ribonucleoside 5'-triphosphate + ADP. In terms of biological role, major role in the synthesis of nucleoside triphosphates other than ATP. The ATP gamma phosphate is transferred to the NDP beta phosphate via a ping-pong mechanism, using a phosphorylated active-site intermediate. The polypeptide is Nucleoside diphosphate kinase (Psychrobacter cryohalolentis (strain ATCC BAA-1226 / DSM 17306 / VKM B-2378 / K5)).